We begin with the raw amino-acid sequence, 388 residues long: uncharacterized protein (388 aa).

This is an uncharacterized protein from Ictaluridae (bullhead catfishes).